The sequence spans 340 residues: GTP 3',8-cyclase (340 aa).

Residues 8-227 (KLGRPIRDLR…TMIEQHFEID (220 aa)) enclose the Radical SAM core domain. Arg17 provides a ligand contact to GTP. Positions 24 and 28 each coordinate [4Fe-4S] cluster. Residue Tyr30 coordinates S-adenosyl-L-methionine. A [4Fe-4S] cluster-binding site is contributed by Cys31. Arg71 serves as a coordination point for GTP. Gly75 lines the S-adenosyl-L-methionine pocket. Thr102 lines the GTP pocket. Ser126 contacts S-adenosyl-L-methionine. Lys163 provides a ligand contact to GTP. Residue Met197 participates in S-adenosyl-L-methionine binding. Residues Cys261 and Cys264 each contribute to the [4Fe-4S] cluster site. Residue 266-268 (RAR) coordinates GTP. Cys278 provides a ligand contact to [4Fe-4S] cluster.

Belongs to the radical SAM superfamily. MoaA family. As to quaternary structure, monomer and homodimer. The cofactor is [4Fe-4S] cluster.

The enzyme catalyses GTP + AH2 + S-adenosyl-L-methionine = (8S)-3',8-cyclo-7,8-dihydroguanosine 5'-triphosphate + 5'-deoxyadenosine + L-methionine + A + H(+). The protein operates within cofactor biosynthesis; molybdopterin biosynthesis. Its function is as follows. Catalyzes the cyclization of GTP to (8S)-3',8-cyclo-7,8-dihydroguanosine 5'-triphosphate. The polypeptide is GTP 3',8-cyclase (Staphylococcus aureus (strain USA300)).